Here is a 98-residue protein sequence, read N- to C-terminus: Large ribosomal subunit protein uL23 (98 aa).

It belongs to the universal ribosomal protein uL23 family. As to quaternary structure, part of the 50S ribosomal subunit. Contacts protein L29, and trigger factor when it is bound to the ribosome.

Functionally, one of the early assembly proteins it binds 23S rRNA. One of the proteins that surrounds the polypeptide exit tunnel on the outside of the ribosome. Forms the main docking site for trigger factor binding to the ribosome. The chain is Large ribosomal subunit protein uL23 from Rickettsia akari (strain Hartford).